Here is a 258-residue protein sequence, read N- to C-terminus: 5'-nucleotidase SurE (258 aa).

A divalent metal cation-binding residues include D8, D9, S40, and N98.

It belongs to the SurE nucleotidase family. The cofactor is a divalent metal cation.

Its subcellular location is the cytoplasm. The enzyme catalyses a ribonucleoside 5'-phosphate + H2O = a ribonucleoside + phosphate. Functionally, nucleotidase that shows phosphatase activity on nucleoside 5'-monophosphates. In Synechococcus elongatus (strain ATCC 33912 / PCC 7942 / FACHB-805) (Anacystis nidulans R2), this protein is 5'-nucleotidase SurE.